The primary structure comprises 343 residues: Thioredoxin domain-containing protein 15 (343 aa).

The signal sequence occupies residues 1 to 20 (MQLLCWWQILLWVLGLPARG). At 21–304 (LEEDSGHTWQ…GPLPSTLVKT (284 aa)) the chain is on the extracellular side. The segment covering 86–95 (EDQRSTEAHD) has biased composition (basic and acidic residues). The segment at 86–112 (EDQRSTEAHDGTCSAQGDEDPRCGGRE) is disordered. In terms of domain architecture, Thioredoxin spans 162–279 (ERNVTGLENF…LKIFIFNQTG (118 aa)). Asn-170, Asn-177, Asn-189, and Asn-276 each carry an N-linked (GlcNAc...) asparagine glycan. Residues 305–325 (VDWLLVFSLFFLISFIMYATI) traverse the membrane as a helical segment. The Cytoplasmic segment spans residues 326–343 (RTESIRWLIPGQEQEHAE).

The protein resides in the cell projection. Its subcellular location is the cilium membrane. Acts as a positive regulator of ciliary hedgehog signaling. Required for cilia biogenesis. This chain is Thioredoxin domain-containing protein 15 (Txndc15), found in Rattus norvegicus (Rat).